Here is a 202-residue protein sequence, read N- to C-terminus: Small ribosomal subunit protein uS4 (202 aa).

A disordered region spans residues 15 to 42; it reads LGDLPGLTRKAAKRSYPPGQHGQARRKR. The S4 RNA-binding domain maps to 90 to 152; sequence NRLDNVCFRL…KCSKQLAEGN (63 aa).

This sequence belongs to the universal ribosomal protein uS4 family. As to quaternary structure, part of the 30S ribosomal subunit. Contacts protein S5. The interaction surface between S4 and S5 is involved in control of translational fidelity.

Its function is as follows. One of the primary rRNA binding proteins, it binds directly to 16S rRNA where it nucleates assembly of the body of the 30S subunit. Functionally, with S5 and S12 plays an important role in translational accuracy. This Parasynechococcus marenigrum (strain WH8102) protein is Small ribosomal subunit protein uS4.